Here is a 752-residue protein sequence, read N- to C-terminus: Multifunctional tryptophan biosynthesis protein (752 aa).

A Glutamine amidotransferase type-1 domain is found at 3 to 202 (FTLLIDNYDS…IQMKGGKWGG (200 aa)). 58–60 (GPG) is an L-glutamine binding site. The active-site Nucleophile; for GATase activity is C86. 136-137 (SL) is a binding site for L-glutamine. Residues H176 and E178 each act as for GATase activity in the active site. Residues 231-495 (ILNRIHAQRL…DTKAFLRSLI (265 aa)) are indole-3-glycerol phosphate synthase. The N-(5'-phosphoribosyl)anthranilate isomerase stretch occupies residues 509 to 752 (LVKICGIRST…VEAFVKAVRG (244 aa)).

It carries out the reaction N-(5-phospho-beta-D-ribosyl)anthranilate = 1-(2-carboxyphenylamino)-1-deoxy-D-ribulose 5-phosphate. The enzyme catalyses 1-(2-carboxyphenylamino)-1-deoxy-D-ribulose 5-phosphate + H(+) = (1S,2R)-1-C-(indol-3-yl)glycerol 3-phosphate + CO2 + H2O. The catalysed reaction is chorismate + L-glutamine = anthranilate + pyruvate + L-glutamate + H(+). The protein operates within amino-acid biosynthesis; L-tryptophan biosynthesis; L-tryptophan from chorismate: step 1/5. It participates in amino-acid biosynthesis; L-tryptophan biosynthesis; L-tryptophan from chorismate: step 3/5. Its pathway is amino-acid biosynthesis; L-tryptophan biosynthesis; L-tryptophan from chorismate: step 4/5. In terms of biological role, trifunctional enzyme bearing the Gln amidotransferase (GATase) domain of anthranilate synthase, indole-glycerolphosphate synthase, and phosphoribosylanthranilate isomerase activities. The protein is Multifunctional tryptophan biosynthesis protein (TRP1) of Cryptococcus neoformans var. neoformans serotype D (strain JEC21 / ATCC MYA-565) (Filobasidiella neoformans).